Here is a 484-residue protein sequence, read N- to C-terminus: Mitochondrial metal transporter 2 (484 aa).

A mitochondrion-targeting transit peptide spans 1–56; it reads MLRISIDSIKQFGSFVPGYNNTSYHAAGRAIRTSSLYSTMISANPRRCLHSSKLLN. The segment covering 73–82 has biased composition (polar residues); the sequence is SSQNGSNSRQ. Positions 73-114 are disordered; sequence SSQNGSNSRQNESEGKKEGKASSVKSLLQHTHSHSHTHMHDN. Basic and acidic residues predominate over residues 83-92; that stretch reads NESEGKKEGK. 5 helical membrane passes run 132 to 152, 158 to 178, 209 to 229, 256 to 276, and 316 to 336; these read ITWI…VGGI, ALLA…LTLF, ILAM…VGPV, ATNV…EWVF, and YFFN…GLII. The segment at 453–484 is disordered; sequence DSKGDLEHSHDTKSTNHTHTHSDSADTHTHKH.

This sequence belongs to the cation diffusion facilitator (CDF) transporter (TC 2.A.4) family. SLC30A subfamily.

The protein localises to the mitochondrion membrane. In terms of biological role, mitochondrial metal transporter involved in mitochondrial iron accumulation. The chain is Mitochondrial metal transporter 2 (MMT2) from Saccharomyces cerevisiae (strain ATCC 204508 / S288c) (Baker's yeast).